The chain runs to 486 residues: Solute carrier family 2, facilitated glucose transporter member 5 (486 aa).

Methionine 1 carries the post-translational modification N-acetylmethionine. Over 1–19 (MEQEGQEKKKEGRLTLVLA) the chain is Cytoplasmic. The helical transmembrane segment at 20 to 40 (LRTLIAAFGSSFQYAYNVSVC) threads the bilayer. Tyrosine 33 is a D-fructose binding site. At 41-69 (NSPSELMTEFYNDTYYDRTGELIDEFPLT) the chain is on the extracellular side. Residue asparagine 52 is glycosylated (N-linked (GlcNAc...) asparagine). Residues 70 to 92 (LLWSVTVSMFPSGGFAGSLLVGP) traverse the membrane as a helical segment. At 93-99 (LVNKFGR) the chain is on the cytoplasmic side. The chain crosses the membrane as a helical span at residues 100–120 (KGALLFNNIFSIVPAILMGCS). Over 121 to 127 (KVARSFE) the chain is Extracellular. Residues 128–150 (LIIISRLLVGICAGVSSNVVPMY) traverse the membrane as a helical segment. Topologically, residues 151-162 (LGELAPKNLRGA) are cytoplasmic. The helical transmembrane segment at 163 to 183 (LGVESQLFITLGILVAQIFGL) threads the bilayer. Residue glutamine 168 participates in D-fructose binding. The Extracellular segment spans residues 184–192 (RSIRQQKGW). Residues 193-211 (PILLGLTGGPAAAACPPFF) form a helical membrane-spanning segment. At 212–274 (PESPRYLLIG…LCAMRGLAWQ (63 aa)) the chain is on the cytoplasmic side. The chain crosses the membrane as a helical span at residues 275 to 294 (LISVVPLMWQQLSGVNAIYY). D-fructose contacts are provided by residues glutamine 284 and 292 to 294 (IYY). The Extracellular segment spans residues 295 to 306 (YDQIYLSPLDTD). The helical transmembrane segment at 307-327 (TQYYTAATGAVNVLMTVCTVF) threads the bilayer. Topologically, residues 328-334 (VVESWAR) are cytoplasmic. The chain crosses the membrane as a helical span at residues 335–355 (LLLLLGFSPLAPTCCVLTAAL). At 356-363 (ALQDTVSW) the chain is on the extracellular side. A helical membrane pass occupies residues 364 to 385 (MPYISIVCIIVYVIGHAIGPAI). Residue histidine 379 participates in D-fructose binding. The Cytoplasmic segment spans residues 386–402 (RSLYTEIFLQSGRPPTW). The chain crosses the membrane as a helical span at residues 403–421 (WGQVHWLSNFTVGLVFPLI). Residue 407 to 408 (HW) coordinates D-fructose. Over 422–426 (QWAGL) the chain is Extracellular. The chain crosses the membrane as a helical span at residues 427–447 (YSFIIFGVACLSTTVYTFLIV). Residues 448 to 486 (PETKGKSFIEIIRRFIRMNKVEVSPDREELKDFPPDVSE) lie on the Cytoplasmic side of the membrane.

It belongs to the major facilitator superfamily. Sugar transporter (TC 2.A.1.1) family. Glucose transporter subfamily. As to expression, detected in jejunum. Detected at the intestinal brush-border membrane (at protein level). Detected in duodenum, jejunum and kidney.

It localises to the apical cell membrane. It is found in the cell membrane. Its subcellular location is the sarcolemma. It catalyses the reaction D-fructose(out) = D-fructose(in). Functionally, functions as a fructose transporter that has only low activity with other monosaccharides. Can mediate the uptake of deoxyglucose, but with low efficiency. Essential for fructose uptake in the small intestine. Plays a role in the regulation of salt uptake and blood pressure in response to dietary fructose. Required for the development of high blood pressure in response to high dietary fructose intake. The sequence is that of Solute carrier family 2, facilitated glucose transporter member 5 from Oryctolagus cuniculus (Rabbit).